Reading from the N-terminus, the 276-residue chain is Diaminopimelate epimerase (276 aa).

Substrate contacts are provided by Asn-13, Gln-46, and Asn-66. Catalysis depends on Cys-75, which acts as the Proton donor. Substrate is bound by residues 76–77 (GN), Asn-159, Asn-192, and 210–211 (ER). Cys-219 acts as the Proton acceptor in catalysis. 220–221 (GT) lines the substrate pocket.

The protein belongs to the diaminopimelate epimerase family. As to quaternary structure, homodimer.

It is found in the cytoplasm. It carries out the reaction (2S,6S)-2,6-diaminopimelate = meso-2,6-diaminopimelate. The protein operates within amino-acid biosynthesis; L-lysine biosynthesis via DAP pathway; DL-2,6-diaminopimelate from LL-2,6-diaminopimelate: step 1/1. Catalyzes the stereoinversion of LL-2,6-diaminopimelate (L,L-DAP) to meso-diaminopimelate (meso-DAP), a precursor of L-lysine and an essential component of the bacterial peptidoglycan. The sequence is that of Diaminopimelate epimerase from Aeromonas salmonicida (strain A449).